We begin with the raw amino-acid sequence, 291 residues long: Small ribosomal subunit biogenesis GTPase RsgA (291 aa).

The CP-type G domain maps to 63-221 (HNELKRPPVS…IADTPGFSAL (159 aa)). Residues 112 to 115 (TKKD) and 164 to 172 (GQSGVGKST) each bind GTP. Residues Cys-245, Cys-250, His-252, and Cys-258 each contribute to the Zn(2+) site.

This sequence belongs to the TRAFAC class YlqF/YawG GTPase family. RsgA subfamily. In terms of assembly, monomer. Associates with 30S ribosomal subunit, binds 16S rRNA. Requires Zn(2+) as cofactor.

The protein localises to the cytoplasm. In terms of biological role, one of several proteins that assist in the late maturation steps of the functional core of the 30S ribosomal subunit. Helps release RbfA from mature subunits. May play a role in the assembly of ribosomal proteins into the subunit. Circularly permuted GTPase that catalyzes slow GTP hydrolysis, GTPase activity is stimulated by the 30S ribosomal subunit. This chain is Small ribosomal subunit biogenesis GTPase RsgA, found in Staphylococcus haemolyticus (strain JCSC1435).